The following is a 293-amino-acid chain: Ribonuclease P/MRP protein subunit RPP1 (293 aa).

This sequence belongs to the eukaryotic/archaeal RNase P protein component 3 family. Component of nuclear RNase P and RNase MRP complexes. RNase P consists of an RNA moiety and at least 9 protein subunits including POP1, POP3, POP4, POP5, POP6, POP7, POP8, RPP1 and RPR2. RNase MRP complex consists of an RNA moiety and at least 10 protein subunits including POP1, POP3, POP4, POP5, POP6, POP7, POP8, RMP1, RPP1 and SNM1, many of which are shared with the RNase P complex.

The protein resides in the nucleus. The enzyme catalyses Endonucleolytic cleavage of RNA, removing 5'-extranucleotides from tRNA precursor.. Component of ribonuclease P, a protein complex that generates mature tRNA molecules by cleaving their 5'-ends. Also a component of RNase MRP, which cleaves pre-rRNA sequences. This Saccharomyces cerevisiae (strain ATCC 204508 / S288c) (Baker's yeast) protein is Ribonuclease P/MRP protein subunit RPP1 (RPP1).